The following is a 459-amino-acid chain: Spermatogenesis-associated protein 1 (459 aa).

Over residues 193–205 (LKELPNKNQEEAG) the composition is skewed to basic and acidic residues. Residues 193 to 213 (LKELPNKNQEEAGGKATAEKS) are disordered. 2 coiled-coil regions span residues 287-374 (TDIS…YKKL) and 400-453 (LIIQ…KKII).

Interacts with IFT20.

It localises to the cytoplasmic vesicle. It is found in the secretory vesicle. The protein resides in the acrosome. The protein is Spermatogenesis-associated protein 1 (SPATA1) of Homo sapiens (Human).